Consider the following 243-residue polypeptide: HTH-type transcriptional regulator MlrA (243 aa).

The 70-residue stretch at 3-72 (LYTIGEVALL…VSKVKMLLSN (70 aa)) folds into the HTH merR-type domain. Residues 6-25 (IGEVALLCDINPVTLRAWQR) constitute a DNA-binding region (H-T-H motif).

Interacts with DgcM and PdeR.

Its activity is regulated as follows. Activity is regulated by DgcM and PdeR. Its function is as follows. Activates transcription of csgD, the master regulator of biofilm formation, by binding to its promoter region. Also controls the transcription of cadC and ibaG. Part of a signaling cascade that regulates curli biosynthesis. The cascade is composed of two c-di-GMP control modules, in which c-di-GMP controlled by the DgcE/PdeH pair (module I) regulates the activity of the DgcM/PdeR pair (module II), which in turn regulates activity of the transcription factor MlrA. In Escherichia coli (strain K12), this protein is HTH-type transcriptional regulator MlrA.